A 257-amino-acid polypeptide reads, in one-letter code: Deoxyribose-phosphate aldolase (257 aa).

The active-site Proton donor/acceptor is D102. The active-site Schiff-base intermediate with acetaldehyde is K166. K198 serves as the catalytic Proton donor/acceptor.

The protein belongs to the DeoC/FbaB aldolase family. DeoC type 2 subfamily.

The protein localises to the cytoplasm. It carries out the reaction 2-deoxy-D-ribose 5-phosphate = D-glyceraldehyde 3-phosphate + acetaldehyde. Its pathway is carbohydrate degradation; 2-deoxy-D-ribose 1-phosphate degradation; D-glyceraldehyde 3-phosphate and acetaldehyde from 2-deoxy-alpha-D-ribose 1-phosphate: step 2/2. Its function is as follows. Catalyzes a reversible aldol reaction between acetaldehyde and D-glyceraldehyde 3-phosphate to generate 2-deoxy-D-ribose 5-phosphate. The chain is Deoxyribose-phosphate aldolase from Shewanella sediminis (strain HAW-EB3).